The sequence spans 178 residues: Protein GrpE (178 aa).

This sequence belongs to the GrpE family. As to quaternary structure, homodimer.

It is found in the cytoplasm. In terms of biological role, participates actively in the response to hyperosmotic and heat shock by preventing the aggregation of stress-denatured proteins, in association with DnaK and GrpE. It is the nucleotide exchange factor for DnaK and may function as a thermosensor. Unfolded proteins bind initially to DnaJ; upon interaction with the DnaJ-bound protein, DnaK hydrolyzes its bound ATP, resulting in the formation of a stable complex. GrpE releases ADP from DnaK; ATP binding to DnaK triggers the release of the substrate protein, thus completing the reaction cycle. Several rounds of ATP-dependent interactions between DnaJ, DnaK and GrpE are required for fully efficient folding. The polypeptide is Protein GrpE (Rickettsia typhi (strain ATCC VR-144 / Wilmington)).